The sequence spans 185 residues: Ribosome-recycling factor (185 aa).

The disordered stretch occupies residues 142–165 (IVKDGDAGEDEGSRAEKELDGLTK).

The protein belongs to the RRF family.

Its subcellular location is the cytoplasm. Responsible for the release of ribosomes from messenger RNA at the termination of protein biosynthesis. May increase the efficiency of translation by recycling ribosomes from one round of translation to another. The chain is Ribosome-recycling factor from Renibacterium salmoninarum (strain ATCC 33209 / DSM 20767 / JCM 11484 / NBRC 15589 / NCIMB 2235).